A 365-amino-acid chain; its full sequence is Chorismate synthase (365 aa).

R48 and R54 together coordinate NADP(+). FMN contacts are provided by residues 125–127 (RSS), 238–239 (NA), G278, 293–297 (KPTSS), and R319.

Belongs to the chorismate synthase family. Homotetramer. The cofactor is FMNH2.

It catalyses the reaction 5-O-(1-carboxyvinyl)-3-phosphoshikimate = chorismate + phosphate. The protein operates within metabolic intermediate biosynthesis; chorismate biosynthesis; chorismate from D-erythrose 4-phosphate and phosphoenolpyruvate: step 7/7. Functionally, catalyzes the anti-1,4-elimination of the C-3 phosphate and the C-6 proR hydrogen from 5-enolpyruvylshikimate-3-phosphate (EPSP) to yield chorismate, which is the branch point compound that serves as the starting substrate for the three terminal pathways of aromatic amino acid biosynthesis. This reaction introduces a second double bond into the aromatic ring system. The sequence is that of Chorismate synthase from Vesicomyosocius okutanii subsp. Calyptogena okutanii (strain HA).